Consider the following 822-residue polypeptide: Sushi domain-containing protein 2 (822 aa).

Residues 1-27 (MKPALLPWALLLLATALGPGPGPTADA) form the signal peptide. An SMB domain is found at 28–66 (QESCSMRCGALDGPCSCHPTCSGLGTCCLDFRDFCLEIL). The Extracellular portion of the chain corresponds to 28–785 (QESCSMRCGA…PKCQPGRSYA (758 aa)). Disulfide bonds link Cys31–Cys35, Cys31–Cys44, Cys35–Cys62, Cys42–Cys44, Cys42–Cys55, Cys48–Cys54, and Cys55–Cys62. Asn162 and Asn177 each carry an N-linked (GlcNAc...) asparagine glycan. The 149-residue stretch at 285–433 (PVAWARTQCQ…PDCPRYMQRR (149 aa)) folds into the AMOP domain. The VWFD domain maps to 445 to 639 (RLASAFGDPH…NWTVHNASSL (195 aa)). Asn522 is a glycosylation site (N-linked (GlcNAc...) asparagine). The 58-residue stretch at 723–780 (VSCGWLAPPPNGQKEGNRYLAGSTIYFHCDNGYSLAGAETSTCQADGTWSSPTPKCQP) folds into the Sushi domain. 2 disulfide bridges follow: Cys725-Cys765 and Cys751-Cys778. A helical membrane pass occupies residues 786 to 806 (VLLGIIFGGLAVVAAVALVYV). Over 807–822 (LLRRRKGNTHVWGAQP) the chain is Cytoplasmic.

As to quaternary structure, interacts with LGALS1; leads to an increased amount of LGALS1 on the cell surface. Interacts with GPR15LG; the interaction is direct. In terms of tissue distribution, highly expressed in breast cancer, but shows a restricted expression pattern in normal tissues such as adipose, adrenal gland, kidney, lung, mammary gland, placenta, thyroid, trachea, and uterus. Also expressed in colon; down-regulated in colon cancer tissues.

Its subcellular location is the cell membrane. Functionally, may be a cytokine receptor for GPR15LG. May be a tumor suppressor; together with GPR15LG has a growth inhibitory effect on colon cancer cells which includes G1 cell cycle arrest. May play a role in breast tumorigenesis. The chain is Sushi domain-containing protein 2 (SUSD2) from Homo sapiens (Human).